Reading from the N-terminus, the 228-residue chain is Protein GlxC (228 aa).

Belongs to the FwdC/FmdC family.

This Rhizobium meliloti (strain 1021) (Ensifer meliloti) protein is Protein GlxC (glxC).